The chain runs to 355 residues: uncharacterized protein (355 aa).

Belongs to the 3-beta-HSD family.

This is an uncharacterized protein from Frog virus 3 (isolate Goorha) (FV-3).